The primary structure comprises 168 residues: Putative adenylate kinase (168 aa).

Glycine 10, glycine 12, lysine 13, threonine 14, and threonine 15 together coordinate ATP. Residues 28 to 51 (HLNERIREEGLDAGRDEERDSLVA) are NMP. The interval 97–107 (DRGEPAAKAAE) is LID. Arginine 98 serves as a coordination point for ATP.

It belongs to the adenylate kinase family. AK6 subfamily. In terms of assembly, interacts with uS11. Not a structural component of 40S pre-ribosomes, but transiently interacts with them by binding to uS11.

The enzyme catalyses AMP + ATP = 2 ADP. It catalyses the reaction ATP + H2O = ADP + phosphate + H(+). Its function is as follows. Broad-specificity nucleoside monophosphate (NMP) kinase that catalyzes the reversible transfer of the terminal phosphate group between nucleoside triphosphates and monophosphates. Also has ATPase activity. Involved in the late maturation steps of the 30S ribosomal particles, specifically 16S rRNA maturation. While NMP activity is not required for ribosome maturation, ATPase activity is. Associates transiently with small ribosomal subunit protein uS11. ATP hydrolysis breaks the interaction with uS11. May temporarily remove uS11 from the ribosome to enable a conformational change of the ribosomal RNA that is needed for the final maturation step of the small ribosomal subunit. This is Putative adenylate kinase from Natronomonas pharaonis (strain ATCC 35678 / DSM 2160 / CIP 103997 / JCM 8858 / NBRC 14720 / NCIMB 2260 / Gabara) (Halobacterium pharaonis).